Here is a 155-residue protein sequence, read N- to C-terminus: Small ribosomal subunit protein uS7c (155 aa).

The protein belongs to the universal ribosomal protein uS7 family. Part of the 30S ribosomal subunit.

Its subcellular location is the plastid. The protein localises to the chloroplast. In terms of biological role, one of the primary rRNA binding proteins, it binds directly to 16S rRNA where it nucleates assembly of the head domain of the 30S subunit. The sequence is that of Small ribosomal subunit protein uS7c (rps7) from Spirogyra maxima (Green alga).